The sequence spans 1006 residues: Probable beta-galactosidase A (1006 aa).

The first 18 residues, 1-18, serve as a signal peptide directing secretion; that stretch reads MKLLSVCAVALLAAQAAG. The substrate site is built by Tyr-96, Asn-140, Ala-141, and Glu-142. Residue Asn-156 is glycosylated (N-linked (GlcNAc...) asparagine). Asn-199 contributes to the substrate binding site. Glu-200 (proton donor) is an active-site residue. Cys-205 and Cys-206 are joined by a disulfide. Asn-207 carries N-linked (GlcNAc...) asparagine glycosylation. Residue Tyr-260 participates in substrate binding. Residues Cys-266 and Cys-315 are joined by a disulfide bond. The active-site Nucleophile is the Glu-298. Tyr-364 lines the substrate pocket. Asn-373, Asn-402, Asn-422, Asn-622, Asn-777, and Asn-914 each carry an N-linked (GlcNAc...) asparagine glycan.

It belongs to the glycosyl hydrolase 35 family.

Its subcellular location is the secreted. It carries out the reaction Hydrolysis of terminal non-reducing beta-D-galactose residues in beta-D-galactosides.. In terms of biological role, cleaves beta-linked terminal galactosyl residues from gangliosides, glycoproteins, and glycosaminoglycans. This is Probable beta-galactosidase A (lacA) from Neosartorya fischeri (strain ATCC 1020 / DSM 3700 / CBS 544.65 / FGSC A1164 / JCM 1740 / NRRL 181 / WB 181) (Aspergillus fischerianus).